Reading from the N-terminus, the 310-residue chain is Protein N-terminal asparagine amidohydrolase (310 aa).

In terms of assembly, monomer.

It is found in the cytoplasm. It catalyses the reaction N-terminal L-asparaginyl-[protein] + H2O + H(+) = N-terminal L-aspartyl-[protein] + NH4(+). With respect to regulation, inhibited by micromolar concentrations of copper and zinc ions. In terms of biological role, N-terminal asparagine deamidase that mediates deamidation of N-terminal asparagine residues to aspartate. Required for the ubiquitin-dependent turnover of intracellular proteins that initiate with Met-Asn. These proteins are acetylated on the retained initiator methionine and can subsequently be modified by the removal of N-acetyl methionine by acylaminoacid hydrolase (AAH). Conversion of the resulting N-terminal asparagine to aspartate by NTAN1/PNAD renders the protein susceptible to arginylation, polyubiquitination and degradation as specified by the N-end rule. This enzyme does not act on substrates with internal or C-terminal asparagines and does not act on glutamine residues in any position, nor on acetylated N-terminal peptidyl Asn. The sequence is that of Protein N-terminal asparagine amidohydrolase (NTAN1) from Homo sapiens (Human).